The chain runs to 147 residues: Globin, polymeric component P3 (147 aa).

Residues 2–146 enclose the Globin domain; sequence HLTADQVAAL…ISDALIAGLE (145 aa). Position 96 (H96) interacts with heme b.

This sequence belongs to the globin family. In terms of assembly, polymer.

The polypeptide is Globin, polymeric component P3 (Glycera dibranchiata (Bloodworm)).